A 757-amino-acid polypeptide reads, in one-letter code: Cellulose synthase-like protein B2 (757 aa).

Transmembrane regions (helical) follow at residues 24-44 (AVDLTILGLLFSLLLHRILYM) and 48-68 (GIIWLVAFLCESCFSFVWLLS). Residues aspartate 136 and aspartate 461 contribute to the active site. A run of 6 helical transmembrane segments spans residues 533 to 555 (AYLCVSICVRSIPELIYCLLPAY), 568 to 588 (LCLGITMLLAGMHCLYTLWEF), 607 to 627 (IVATSSWLFSIFDIILKLLGL), 672 to 692 (FLPGTFIVLVNLAALVGVFVG), 704 to 724 (GSGLGEACACILVVMLFFPFL), and 735 to 755 (IPLSTLSKAGFLAVSFVVFSV).

It belongs to the glycosyltransferase 2 family. Plant cellulose synthase-like B subfamily. Expressed in young seedlings, primarily in the root vascular tissue.

It localises to the golgi apparatus membrane. Its function is as follows. Thought to be a Golgi-localized beta-glycan synthase that polymerize the backbones of noncellulosic polysaccharides (hemicelluloses) of plant cell wall. This chain is Cellulose synthase-like protein B2 (CSLB2), found in Arabidopsis thaliana (Mouse-ear cress).